Reading from the N-terminus, the 331-residue chain is Biotin synthase (331 aa).

Positions 51-278 (QTIQLSTLMS…KSYVRLSAGR (228 aa)) constitute a Radical SAM core domain. Positions 66, 70, and 73 each coordinate [4Fe-4S] cluster. [2Fe-2S] cluster contacts are provided by C110, C141, C201, and R273.

It belongs to the radical SAM superfamily. Biotin synthase family. In terms of assembly, homodimer. The cofactor is [4Fe-4S] cluster. [2Fe-2S] cluster is required as a cofactor.

It catalyses the reaction (4R,5S)-dethiobiotin + (sulfur carrier)-SH + 2 reduced [2Fe-2S]-[ferredoxin] + 2 S-adenosyl-L-methionine = (sulfur carrier)-H + biotin + 2 5'-deoxyadenosine + 2 L-methionine + 2 oxidized [2Fe-2S]-[ferredoxin]. It functions in the pathway cofactor biosynthesis; biotin biosynthesis; biotin from 7,8-diaminononanoate: step 2/2. Functionally, catalyzes the conversion of dethiobiotin (DTB) to biotin by the insertion of a sulfur atom into dethiobiotin via a radical-based mechanism. The chain is Biotin synthase from Histophilus somni (strain 129Pt) (Haemophilus somnus).